Consider the following 405-residue polypeptide: uncharacterized protein (405 aa).

13 helical membrane-spanning segments follow: residues 19–39 (IVSI…PLAV), 48–68 (MGFS…ATLL), 85–105 (IVVF…LADI), 106–126 (ASAW…ILGI), 129–149 (SFAG…LHIG), 156–176 (GIVT…CYAW), 178–198 (GLQG…LLAL), 224–244 (GMAL…ITLF), 252–272 (GAAF…LLFP), 283–303 (VAMI…TAAM), 309–329 (IGVL…GVVA), 344–364 (TYTV…GLVM), and 366–386 (WAGV…ALLL).

It belongs to the major facilitator superfamily. YhhS family.

The protein localises to the cell inner membrane. This is an uncharacterized protein from Salmonella paratyphi C (strain RKS4594).